The sequence spans 216 residues: TATA-box-binding protein-like 1 (216 aa).

2 tandem repeats follow at residues 38–121 (KPVI…QRLG) and 126–210 (FNHF…ILLQ).

The protein belongs to the TBP family.

It localises to the nucleus. In terms of biological role, TATA box-binding transcription factor. Members of the TBP family are differentially required to regulate transcription and development during early embryogenesis. The sequence is that of TATA-box-binding protein-like 1 (trf1) from Entamoeba histolytica (strain ATCC 30459 / HM-1:IMSS / ABRM).